The sequence spans 159 residues: Phosphopantetheine adenylyltransferase (159 aa).

Residue Thr9 coordinates substrate. Residues 9-10 and His17 contribute to the ATP site; that span reads TF. Residues Lys41, Leu73, and Arg87 each contribute to the substrate site. ATP contacts are provided by residues 88-90, Glu98, and 123-129; these read GLR and YSFISST.

This sequence belongs to the bacterial CoaD family. As to quaternary structure, homohexamer. Mg(2+) serves as cofactor.

The protein localises to the cytoplasm. The catalysed reaction is (R)-4'-phosphopantetheine + ATP + H(+) = 3'-dephospho-CoA + diphosphate. The protein operates within cofactor biosynthesis; coenzyme A biosynthesis; CoA from (R)-pantothenate: step 4/5. Its function is as follows. Reversibly transfers an adenylyl group from ATP to 4'-phosphopantetheine, yielding dephospho-CoA (dPCoA) and pyrophosphate. The chain is Phosphopantetheine adenylyltransferase from Pseudomonas putida (strain ATCC 700007 / DSM 6899 / JCM 31910 / BCRC 17059 / LMG 24140 / F1).